A 158-amino-acid polypeptide reads, in one-letter code: Ribosomal RNA large subunit methyltransferase H (158 aa).

Residues L76, G107, and 126-131 each bind S-adenosyl-L-methionine; that span reads LSGLTM.

The protein belongs to the RNA methyltransferase RlmH family. Homodimer.

It is found in the cytoplasm. The catalysed reaction is pseudouridine(1915) in 23S rRNA + S-adenosyl-L-methionine = N(3)-methylpseudouridine(1915) in 23S rRNA + S-adenosyl-L-homocysteine + H(+). In terms of biological role, specifically methylates the pseudouridine at position 1915 (m3Psi1915) in 23S rRNA. The sequence is that of Ribosomal RNA large subunit methyltransferase H from Teredinibacter turnerae (strain ATCC 39867 / T7901).